A 1368-amino-acid polypeptide reads, in one-letter code: DNA-directed RNA polymerase subunit beta (1368 aa).

Belongs to the RNA polymerase beta chain family. As to quaternary structure, the RNAP catalytic core consists of 2 alpha, 1 beta, 1 beta' and 1 omega subunit. When a sigma factor is associated with the core the holoenzyme is formed, which can initiate transcription.

It carries out the reaction RNA(n) + a ribonucleoside 5'-triphosphate = RNA(n+1) + diphosphate. Functionally, DNA-dependent RNA polymerase catalyzes the transcription of DNA into RNA using the four ribonucleoside triphosphates as substrates. The protein is DNA-directed RNA polymerase subunit beta of Burkholderia lata (strain ATCC 17760 / DSM 23089 / LMG 22485 / NCIMB 9086 / R18194 / 383).